The sequence spans 192 residues: Thymidine kinase (192 aa).

ATP is bound by residues 9–16 (SAMNAGKS) and 87–90 (DECQ). E88 serves as the catalytic Proton acceptor. The Zn(2+) site is built by C145, C147, C182, and H185.

Belongs to the thymidine kinase family. Homotetramer.

It is found in the cytoplasm. The catalysed reaction is thymidine + ATP = dTMP + ADP + H(+). The polypeptide is Thymidine kinase (Vibrio vulnificus (strain YJ016)).